Consider the following 221-residue polypeptide: Uracil-DNA glycosylase 1 (221 aa).

The Proton acceptor role is filled by Asp-61.

This sequence belongs to the uracil-DNA glycosylase (UDG) superfamily. UNG family.

It localises to the cytoplasm. It catalyses the reaction Hydrolyzes single-stranded DNA or mismatched double-stranded DNA and polynucleotides, releasing free uracil.. Functionally, excises uracil residues from the DNA which can arise as a result of misincorporation of dUMP residues by DNA polymerase or due to deamination of cytosine. This chain is Uracil-DNA glycosylase 1, found in Listeria monocytogenes serotype 4b (strain F2365).